Consider the following 82-residue polypeptide: Penaeidin-3i (82 aa).

Residues 1 to 19 form the signal peptide; the sequence is MRLVVCLVFLASFALVCQG. Position 20 is a pyrrolidone carboxylic acid (Gln20). 2 disulfides stabilise this stretch: Cys55–Cys73 and Cys67–Cys74. Residue Ser81 is modified to Serine amide.

The protein belongs to the penaeidin family.

The protein resides in the cytoplasmic granule. In terms of biological role, antibacterial and antifungal activity. Presents chitin-binding activity. This Penaeus vannamei (Whiteleg shrimp) protein is Penaeidin-3i.